A 543-amino-acid chain; its full sequence is Type I restriction enzyme MpnII methylase subunit (543 aa).

S-adenosyl-L-methionine contacts are provided by residues 208–213, 240–242, and Glu-265; these read EFFTPQ and SGS.

The protein belongs to the N(4)/N(6)-methyltransferase family. As to quaternary structure, the methyltransferase is composed of M and S polypeptides.

The catalysed reaction is a 2'-deoxyadenosine in DNA + S-adenosyl-L-methionine = an N(6)-methyl-2'-deoxyadenosine in DNA + S-adenosyl-L-homocysteine + H(+). Its function is as follows. The subtype gamma methyltransferase (M) subunit of a type I restriction enzyme. The M and S subunits together form a methyltransferase (MTase) that probably methylates A-2 on the top strand and A-3 on the bottom strand of the sequence 5'-GAN(7)TAY-3'. As the bacterial DNA is methylated on this sequence and this is the only type I methylase in the genome, it is probably responsible for all of the methylation on this site in the genome. The R subunit has multiple frameshifts and is probably not expressed in this bacteria. This chain is Type I restriction enzyme MpnII methylase subunit, found in Mycoplasma pneumoniae (strain ATCC 29342 / M129 / Subtype 1) (Mycoplasmoides pneumoniae).